Reading from the N-terminus, the 128-residue chain is Ribonuclease P protein component 4 (128 aa).

4 residues coordinate Zn(2+): Cys67, Cys70, Cys96, and Cys99.

Belongs to the eukaryotic/archaeal RNase P protein component 4 family. As to quaternary structure, consists of a catalytic RNA component and at least 4-5 protein subunits. It depends on Zn(2+) as a cofactor.

The protein resides in the cytoplasm. The catalysed reaction is Endonucleolytic cleavage of RNA, removing 5'-extranucleotides from tRNA precursor.. Functionally, part of ribonuclease P, a protein complex that generates mature tRNA molecules by cleaving their 5'-ends. In Methanopyrus kandleri (strain AV19 / DSM 6324 / JCM 9639 / NBRC 100938), this protein is Ribonuclease P protein component 4.